The primary structure comprises 303 residues: Serine/threonine-protein phosphatase PP-X homolog 1 (303 aa).

Residues aspartate 51, histidine 53, aspartate 79, and asparagine 111 each coordinate Mn(2+). Histidine 112 (proton donor) is an active-site residue. Mn(2+) contacts are provided by histidine 161 and histidine 235.

This sequence belongs to the PPP phosphatase family. PP-4 (PP-X) subfamily. Mn(2+) is required as a cofactor.

It carries out the reaction O-phospho-L-seryl-[protein] + H2O = L-seryl-[protein] + phosphate. The enzyme catalyses O-phospho-L-threonyl-[protein] + H2O = L-threonyl-[protein] + phosphate. The protein is Serine/threonine-protein phosphatase PP-X homolog 1 (Ppx1) of Paramecium tetraurelia.